The chain runs to 1073 residues: Envelopment polyprotein (1073 aa).

An N-terminal signal peptide occupies residues 1–19 (MMKVIWFSSLICLVIQCSG). Residues 20–453 (DSGPIICAGP…NPQCYPAKKW (434 aa)) lie on the Lumenal side of the membrane. The cysteines at positions 26 and 49 are disulfide-linked. N-linked (GlcNAc...) asparagine; by host glycans are attached at residues asparagine 33 and asparagine 63. 8 disulfide bridges follow: cysteine 143–cysteine 156, cysteine 180–cysteine 327, cysteine 206–cysteine 216, cysteine 258–cysteine 305, cysteine 287–cysteine 292, cysteine 349–cysteine 352, cysteine 356–cysteine 424, and cysteine 376–cysteine 381. The helical transmembrane segment at 454–474 (LFIIIVILLGYAGLMLLTNVL) threads the bilayer. The interval 475-521 (KAIGVWGSWVIAPVKLMFAIIKKLMRTVSCLVGKLMDRGRQVIHEEI) is golgi retention signal. Residues 475 to 535 (KAIGVWGSWV…EGNQDDVRIE (61 aa)) are Cytoplasmic-facing. Residues 536–562 (MARPRRVRHWMYSPVILTILAIGLAEG) are internal signal sequence for glycoprotein C. 10 disulfides stabilise this stretch: cysteine 563-cysteine 604, cysteine 576-cysteine 586, cysteine 629-cysteine 725, cysteine 644-cysteine 841, cysteine 650-cysteine 698, cysteine 656-cysteine 705, cysteine 660-cysteine 687, cysteine 691-cysteine 696, cysteine 778-cysteine 793, and cysteine 809-cysteine 823. At 563–1036 (CDEMVHADSK…ALFGNGLSRW (474 aa)) the chain is on the lumenal side. A fusion loop region spans residues 650–656 (CRWAGDC). A fusion loop region spans residues 691-705 (CGGAACGCFNAAPSC). N-linked (GlcNAc...) asparagine; by host glycosylation is found at asparagine 853 and asparagine 914. 3 cysteine pairs are disulfide-bonded: cysteine 908/cysteine 978, cysteine 918/cysteine 921, and cysteine 943/cysteine 974. The N-linked (GlcNAc...) asparagine; by host glycan is linked to asparagine 936. A helical membrane pass occupies residues 1037-1057 (ILGVIGVLLGGLALFFLIMFL). The Cytoplasmic portion of the chain corresponds to 1058–1073 (LKLGTKQVFRSRTKLA).

Belongs to the phlebovirus envelope glycoprotein family. In terms of assembly, homodimer. Heterodimer with glycoprotein C. Homotrimer (postfusion). As to quaternary structure, heterodimer with glycoprotein N. Specific enzymatic cleavages in vivo yield mature proteins including glycoprotein C and glycoprotein N. In terms of processing, the cytoplasmic tail is Palmitoylated. Post-translationally, glycosylated. Palmitoylated.

It localises to the virion membrane. The protein resides in the host Golgi apparatus membrane. It is found in the host endoplasmic reticulum membrane. In terms of biological role, structural component of the virion that interacts with glycoprotein C. It shields the hydrophobic fusion loops of the glycoprotein C, preventing premature fusion. The glycoprotein protrusions are arranged on an icosahedral lattice, with T=12 triangulation. They are able to attach the virion to the host cell receptor CD209/DC-SIGN and to promote fusion of membranes with the late endosome after clathrin-mediated endocytosis of the virion. Plays a role in the packaging of ribonucleoproteins and polymerase during virus assembly. Functionally, structural component of the virion that interacts with glycoprotein N. Acts as a class II fusion protein that is activated upon acidification and subsequent repositioning of the glycoprotein N. The glycoprotein protrusions are arranged on an icosahedral lattice, with T=12 triangulation. They are able to attach the virion to the host cell receptor CD209/DC-SIGN and to promote fusion of membranes with the late endosome after clathrin-mediated endocytosis of the virion. The sequence is that of Envelopment polyprotein (GP) from SFTS phlebovirus (isolate SFTSV/Human/China/HB29/2010) (Severe fever with thrombocytopenia virus).